The sequence spans 305 residues: Methionyl-tRNA formyltransferase (305 aa).

Serine 111–proline 114 serves as a coordination point for (6S)-5,6,7,8-tetrahydrofolate.

It belongs to the Fmt family.

It catalyses the reaction L-methionyl-tRNA(fMet) + (6R)-10-formyltetrahydrofolate = N-formyl-L-methionyl-tRNA(fMet) + (6S)-5,6,7,8-tetrahydrofolate + H(+). In terms of biological role, attaches a formyl group to the free amino group of methionyl-tRNA(fMet). The formyl group appears to play a dual role in the initiator identity of N-formylmethionyl-tRNA by promoting its recognition by IF2 and preventing the misappropriation of this tRNA by the elongation apparatus. This is Methionyl-tRNA formyltransferase from Helicobacter acinonychis (strain Sheeba).